Reading from the N-terminus, the 343-residue chain is tRNA N6-adenosine threonylcarbamoyltransferase (343 aa).

Residues His120 and His124 each contribute to the Fe cation site. Residues Val142 to Gly146, Asp175, Gly188, Asp192, and Asn281 each bind substrate. Asp310 contacts Fe cation.

This sequence belongs to the KAE1 / TsaD family. Fe(2+) is required as a cofactor.

Its subcellular location is the cytoplasm. The catalysed reaction is L-threonylcarbamoyladenylate + adenosine(37) in tRNA = N(6)-L-threonylcarbamoyladenosine(37) in tRNA + AMP + H(+). Functionally, required for the formation of a threonylcarbamoyl group on adenosine at position 37 (t(6)A37) in tRNAs that read codons beginning with adenine. Is involved in the transfer of the threonylcarbamoyl moiety of threonylcarbamoyl-AMP (TC-AMP) to the N6 group of A37, together with TsaE and TsaB. TsaD likely plays a direct catalytic role in this reaction. The protein is tRNA N6-adenosine threonylcarbamoyltransferase of Bacillus cereus (strain ATCC 14579 / DSM 31 / CCUG 7414 / JCM 2152 / NBRC 15305 / NCIMB 9373 / NCTC 2599 / NRRL B-3711).